Reading from the N-terminus, the 304-residue chain is Glutaminase (304 aa).

Substrate is bound by residues S63, N114, E158, N165, Y189, Y240, and V258.

Belongs to the glutaminase family. As to quaternary structure, homotetramer.

The catalysed reaction is L-glutamine + H2O = L-glutamate + NH4(+). This chain is Glutaminase, found in Shewanella oneidensis (strain ATCC 700550 / JCM 31522 / CIP 106686 / LMG 19005 / NCIMB 14063 / MR-1).